The sequence spans 247 residues: NAD(P)H-quinone oxidoreductase subunit K, chloroplastic (247 aa).

Positions 61, 62, 126, and 157 each coordinate [4Fe-4S] cluster.

This sequence belongs to the complex I 20 kDa subunit family. In terms of assembly, NDH is composed of at least 16 different subunits, 5 of which are encoded in the nucleus. [4Fe-4S] cluster is required as a cofactor.

Its subcellular location is the plastid. It is found in the chloroplast thylakoid membrane. It carries out the reaction a plastoquinone + NADH + (n+1) H(+)(in) = a plastoquinol + NAD(+) + n H(+)(out). The enzyme catalyses a plastoquinone + NADPH + (n+1) H(+)(in) = a plastoquinol + NADP(+) + n H(+)(out). NDH shuttles electrons from NAD(P)H:plastoquinone, via FMN and iron-sulfur (Fe-S) centers, to quinones in the photosynthetic chain and possibly in a chloroplast respiratory chain. The immediate electron acceptor for the enzyme in this species is believed to be plastoquinone. Couples the redox reaction to proton translocation, and thus conserves the redox energy in a proton gradient. The protein is NAD(P)H-quinone oxidoreductase subunit K, chloroplastic of Anthoceros angustus (Hornwort).